A 264-amino-acid chain; its full sequence is 5'-nucleotidase SurE (264 aa).

A divalent metal cation-binding residues include Asp9, Asp10, Ser40, and Asn95.

The protein belongs to the SurE nucleotidase family. A divalent metal cation is required as a cofactor.

It localises to the cytoplasm. It catalyses the reaction a ribonucleoside 5'-phosphate + H2O = a ribonucleoside + phosphate. Nucleotidase that shows phosphatase activity on nucleoside 5'-monophosphates. This Helicobacter hepaticus (strain ATCC 51449 / 3B1) protein is 5'-nucleotidase SurE.